The chain runs to 177 residues: NADH-quinone oxidoreductase subunit B (177 aa).

[4Fe-4S] cluster is bound by residues Cys-36, Cys-37, Cys-101, and Cys-130.

It belongs to the complex I 20 kDa subunit family. NDH-1 is composed of 14 different subunits. Subunits NuoB, C, D, E, F, and G constitute the peripheral sector of the complex. Requires [4Fe-4S] cluster as cofactor.

It localises to the cell inner membrane. It carries out the reaction a quinone + NADH + 5 H(+)(in) = a quinol + NAD(+) + 4 H(+)(out). Its function is as follows. NDH-1 shuttles electrons from NADH, via FMN and iron-sulfur (Fe-S) centers, to quinones in the respiratory chain. The immediate electron acceptor for the enzyme in this species is believed to be ubiquinone. Couples the redox reaction to proton translocation (for every two electrons transferred, four hydrogen ions are translocated across the cytoplasmic membrane), and thus conserves the redox energy in a proton gradient. In Hydrogenobaculum sp. (strain Y04AAS1), this protein is NADH-quinone oxidoreductase subunit B.